Reading from the N-terminus, the 282-residue chain is Tyrosine recombinase XerA (282 aa).

Residues 2-79 (EAINEVIEEY…ALRSYFRFEG (78 aa)) form the Core-binding (CB) domain. In terms of domain architecture, Tyr recombinase spans 95–271 (SLPKSLTREE…TVEHLRKAQE (177 aa)). Catalysis depends on residues arginine 132, lysine 157, histidine 223, arginine 226, and histidine 249. Tyrosine 258 acts as the O-(3'-phospho-DNA)-tyrosine intermediate in catalysis.

This sequence belongs to the 'phage' integrase family. XerA subfamily.

It is found in the cytoplasm. In terms of biological role, site-specific tyrosine recombinase, which acts by catalyzing the cutting and rejoining of the recombining DNA molecules. This chain is Tyrosine recombinase XerA, found in Thermococcus onnurineus (strain NA1).